The chain runs to 461 residues: Siroheme synthase (461 aa).

Positions 1–204 (MRYLPLFVYL…GNFRKANRVI (204 aa)) are precorrin-2 dehydrogenase /sirohydrochlorin ferrochelatase. NAD(+) contacts are provided by residues 22–23 (IV) and 43–44 (KT). Serine 128 bears the Phosphoserine mark. The segment at 218–461 (GSVSLVGAGP…HNEISWFGNG (244 aa)) is uroporphyrinogen-III C-methyltransferase. S-adenosyl-L-methionine is bound at residue proline 227. Aspartate 250 serves as the catalytic Proton acceptor. The Proton donor role is filled by lysine 272. S-adenosyl-L-methionine contacts are provided by residues 303-305 (GGD), isoleucine 308, methionine 386, and glycine 415.

In the N-terminal section; belongs to the precorrin-2 dehydrogenase / sirohydrochlorin ferrochelatase family. The protein in the C-terminal section; belongs to the precorrin methyltransferase family.

The enzyme catalyses uroporphyrinogen III + 2 S-adenosyl-L-methionine = precorrin-2 + 2 S-adenosyl-L-homocysteine + H(+). It catalyses the reaction precorrin-2 + NAD(+) = sirohydrochlorin + NADH + 2 H(+). The catalysed reaction is siroheme + 2 H(+) = sirohydrochlorin + Fe(2+). It participates in cofactor biosynthesis; adenosylcobalamin biosynthesis; precorrin-2 from uroporphyrinogen III: step 1/1. It functions in the pathway cofactor biosynthesis; adenosylcobalamin biosynthesis; sirohydrochlorin from precorrin-2: step 1/1. Its pathway is porphyrin-containing compound metabolism; siroheme biosynthesis; precorrin-2 from uroporphyrinogen III: step 1/1. The protein operates within porphyrin-containing compound metabolism; siroheme biosynthesis; siroheme from sirohydrochlorin: step 1/1. It participates in porphyrin-containing compound metabolism; siroheme biosynthesis; sirohydrochlorin from precorrin-2: step 1/1. Multifunctional enzyme that catalyzes the SAM-dependent methylations of uroporphyrinogen III at position C-2 and C-7 to form precorrin-2 via precorrin-1. Then it catalyzes the NAD-dependent ring dehydrogenation of precorrin-2 to yield sirohydrochlorin. Finally, it catalyzes the ferrochelation of sirohydrochlorin to yield siroheme. In Blochmanniella floridana, this protein is Siroheme synthase.